The chain runs to 122 residues: Large ribosomal subunit protein uL14 (122 aa).

This sequence belongs to the universal ribosomal protein uL14 family. As to quaternary structure, part of the 50S ribosomal subunit. Forms a cluster with proteins L3 and L19. In the 70S ribosome, L14 and L19 interact and together make contacts with the 16S rRNA in bridges B5 and B8.

Binds to 23S rRNA. Forms part of two intersubunit bridges in the 70S ribosome. This Burkholderia vietnamiensis (strain G4 / LMG 22486) (Burkholderia cepacia (strain R1808)) protein is Large ribosomal subunit protein uL14.